We begin with the raw amino-acid sequence, 189 residues long: UPF0301 protein PputW619_0469 (189 aa).

Belongs to the UPF0301 (AlgH) family.

The protein is UPF0301 protein PputW619_0469 of Pseudomonas putida (strain W619).